The following is a 1326-amino-acid chain: F-box/WD repeat-containing protein 7 (1326 aa).

6 disordered regions span residues Met1 to Gly58, Asp123 to Glu187, Thr318 to Arg351, Gly399 to Ser549, Arg615 to Ser642, and Thr797 to Pro843. Polar residues predominate over residues Ser9–Ser39. Positions Asn165–Glu187 are enriched in acidic residues. Residues Ser320–Ala348 are compositionally biased toward low complexity. Residues Ala403 to Ala464 are compositionally biased toward polar residues. Over residues Ser465–Ser486 the composition is skewed to low complexity. Polar residues predominate over residues Val495 to Tyr504. Low complexity-rich tracts occupy residues Thr510 to Ser520, Asn528 to Ser546, and Ser616 to Pro631. Polar residues-rich tracts occupy residues Thr632–Ser642 and Thr797–Gly824. Residue Thr813 is modified to Phosphothreonine. Residue Ser825 is modified to Phosphoserine. An F-box domain is found at Arg889–Lys935. WD repeat units follow at residues Gly992–Thr1030, Gly1033–Thr1070, Gly1073–Val1110, Gly1113–Thr1150, Gly1153–Thr1190, Gly1193–Ser1232, and Lys1236–Asn1273.

As to quaternary structure, part of a SCF E3 ubiquitin-protein ligase complex. Interacts with Myc and puf. Interacts with CycE. In terms of tissue distribution, expressed in follicle cell epithelium and imaginal disks, particularly in the morphogenetic furrow.

It localises to the nucleus. The protein operates within protein modification; protein ubiquitination. Substrate recognition component of a SCF (SKP1-CUL1-F-box protein) E3 ubiquitin-protein ligase complex which mediates the ubiquitination and subsequent proteasomal degradation of target proteins. Probably recognizes and binds to phosphorylated target proteins. In the wing and eye, negatively regulates cell growth and proliferation by mediating the degradation of Myc and cyclin E, respectively. Required for endocycles, but not mitosis in follicle cell epithelium. This is F-box/WD repeat-containing protein 7 from Drosophila melanogaster (Fruit fly).